Here is a 982-residue protein sequence, read N- to C-terminus: E3 ubiquitin-protein ligase CBL-B (982 aa).

The interval 35–167 (PPKQAAADRR…KAIFPNGQFQ (133 aa)) is 4H. Positions 35 to 343 (PPKQAAADRR…GRSYNPDLTG (309 aa)) constitute a Cbl-PTB domain. Positions 168–240 (GDNFRITKAD…FEFDIFTRLF (73 aa)) are EF-hand-like. Positions 221, 223, 225, 227, and 232 each coordinate Ca(2+). The interval 241–343 (QPWGSILRNW…GRSYNPDLTG (103 aa)) is SH2-like. S282 carries the post-translational modification Phosphoserine; by PKC/PRKCQ. A 4-O-phospho-L-tyrosine-binding site is contributed by R286. The interval 344–372 (LCEPTPHDHIKVTQEQYELYCEMGSTFQL) is linker. Residue Y363 is modified to Phosphotyrosine. An RING-type zinc finger spans residues 373–412 (CKICAENDKDVKIEPCGHLMCTSCLTAWQESDGQGCPFCR). Residues 466–571 (NVRKCTDRQN…PPPIPPDNRL (106 aa)) are disordered. Polar residues predominate over residues 473-486 (RQNSPVTSPGSSPL). Phosphoserine is present on residues S476, S480, S484, S521, S525, and S529. The tract at residues 543-568 (PLPAPPPPLRDPPPPPPERPPPIPPD) is interaction with VAV1. Residues 544–567 (LPAPPPPLRDPPPPPPERPPPIPP) show a composition bias toward pro residues. S634 carries the phosphoserine modification. 2 positions are modified to phosphotyrosine: Y665 and Y709. 2 disordered regions span residues 688-731 (GPLA…NVKP) and 769-929 (FDSA…EAAL). Polar residues predominate over residues 715 to 725 (HPVSLNSQPSH). A compositionally biased stretch (pro residues) spans 819–828 (PSLPPPPPPA). Positions 838–848 (PPGSSSRPSSG) are enriched in low complexity. The span at 880–899 (VKTNRTSQDYDQLPSCSDGS) shows a compositional bias: polar residues. At Y889 the chain carries Phosphotyrosine. The interval 891–927 (QLPSCSDGSQAPARPPKPRPRRTAPEIHHRKPHGPEA) is interaction with SH3KBP1. Positions 906 to 922 (PKPRPRRTAPEIHHRKP) are enriched in basic residues. Positions 931 to 970 (NVDAKIAKLMGEGYAFEEVKRALEIAQNNVEVARSILREF) constitute a UBA domain.

As to quaternary structure, interacts with SH3 domain-containing proteins LCK, CRK and SORBS1. Interacts with LCP2 and ZAP70. Interacts with CBL. Interacts with SH3 domain-containing proteins VAV1, FYN, FGR, PLCG1, GRB2, CRKL, PIK3R1 and SH3KBP1/CIN85. Identified in heterotrimeric complexes with SH3KBP1/CIN85, CD2AP and ARHGEF7, where one CBLB peptide binds two copies of the other protein. Interacts with poly-ubiquitinated proteins. Dimerization is required for the binding of poly-ubiquitin, but not for the binding of mono-ubiquitin. Interacts with EGFR (phosphorylated). Interacts with IFT20. Post-translationally, phosphorylated on tyrosine and serine residues upon TCR or BCR activation, and upon various types of cell stimulation. Auto-ubiquitinated upon EGF-mediated cell activation or upon T-cell costimulation by CD28; which promotes proteasomal degradation. Expressed in placenta, heart, lung, kidney, spleen, ovary and testis, as well as fetal brain and liver and hematopoietic cell lines, but not in adult brain, liver, pancreas, salivary gland, or skeletal muscle. Present in lymphocytes (at protein level).

The protein resides in the cytoplasm. It carries out the reaction S-ubiquitinyl-[E2 ubiquitin-conjugating enzyme]-L-cysteine + [acceptor protein]-L-lysine = [E2 ubiquitin-conjugating enzyme]-L-cysteine + N(6)-ubiquitinyl-[acceptor protein]-L-lysine.. It participates in protein modification; protein ubiquitination. Its function is as follows. E3 ubiquitin-protein ligase which accepts ubiquitin from specific E2 ubiquitin-conjugating enzymes, and transfers it to substrates, generally promoting their degradation by the proteasome. Negatively regulates TCR (T-cell receptor), BCR (B-cell receptor) and FCER1 (high affinity immunoglobulin epsilon receptor) signal transduction pathways. In naive T-cells, inhibits VAV1 activation upon TCR engagement and imposes a requirement for CD28 costimulation for proliferation and IL-2 production. Also acts by promoting PIK3R1/p85 ubiquitination, which impairs its recruitment to the TCR and subsequent activation. In activated T-cells, inhibits PLCG1 activation and calcium mobilization upon restimulation and promotes anergy. In B-cells, acts by ubiquitinating SYK and promoting its proteasomal degradation. Slightly promotes SRC ubiquitination. May be involved in EGFR ubiquitination and internalization. May be functionally coupled with the E2 ubiquitin-protein ligase UB2D3. In association with CBL, required for proper feedback inhibition of ciliary platelet-derived growth factor receptor-alpha (PDGFRA) signaling pathway via ubiquitination and internalization of PDGFRA. The chain is E3 ubiquitin-protein ligase CBL-B (CBLB) from Homo sapiens (Human).